The sequence spans 268 residues: Nickel import ATP-binding protein NikE (268 aa).

The ABC transporter domain maps to 4–252 (LNVCGLSHHY…SSDAGRVLQN (249 aa)). 45–52 (GRSGCGKS) provides a ligand contact to ATP.

It belongs to the ABC transporter superfamily. Nickel importer (TC 3.A.1.5.3) family. In terms of assembly, the complex is composed of two ATP-binding proteins (NikD and NikE), two transmembrane proteins (NikB and NikC) and a solute-binding protein (NikA).

The protein resides in the cell inner membrane. The enzyme catalyses Ni(2+)(out) + ATP + H2O = Ni(2+)(in) + ADP + phosphate + H(+). Functionally, part of the ABC transporter complex NikABCDE involved in nickel import. Responsible for energy coupling to the transport system. This Shigella flexneri serotype 5b (strain 8401) protein is Nickel import ATP-binding protein NikE.